Consider the following 57-residue polypeptide: Large ribosomal subunit protein bL32 (57 aa).

The segment at 1-20 (MAVQQRRSSKHRRDKRRSHD) is disordered. A compositionally biased stretch (basic residues) spans 7 to 18 (RSSKHRRDKRRS).

Belongs to the bacterial ribosomal protein bL32 family.

The polypeptide is Large ribosomal subunit protein bL32 (rpmF) (Mycoplasma genitalium (strain ATCC 33530 / DSM 19775 / NCTC 10195 / G37) (Mycoplasmoides genitalium)).